We begin with the raw amino-acid sequence, 198 residues long: Probable GTP-binding protein EngB (198 aa).

Residues 21–195 form the EngB-type G domain; the sequence is NIPEVCFVGR…YDALIRLLEV (175 aa). GTP contacts are provided by residues 29–36, 56–60, 75–78, 142–145, and 174–176; these read GRSNVGKS, GKTRL, DAPG, TKLD, and VSN. Residues Ser36 and Thr58 each contribute to the Mg(2+) site.

The protein belongs to the TRAFAC class TrmE-Era-EngA-EngB-Septin-like GTPase superfamily. EngB GTPase family. Mg(2+) serves as cofactor.

In terms of biological role, necessary for normal cell division and for the maintenance of normal septation. The polypeptide is Probable GTP-binding protein EngB (Mesoplasma florum (strain ATCC 33453 / NBRC 100688 / NCTC 11704 / L1) (Acholeplasma florum)).